Consider the following 1466-residue polypeptide: Helicase ARIP4 (1466 aa).

Disordered stretches follow at residues methionine 1–lysine 137 and aspartate 185–asparagine 235. Acidic residues predominate over residues proline 11–serine 49. The span at threonine 72 to serine 82 shows a compositional bias: low complexity. Residues lysine 99 to lysine 114 are compositionally biased toward basic residues. Glycyl lysine isopeptide (Lys-Gly) (interchain with G-Cter in SUMO2) cross-links involve residues lysine 114 and lysine 126. Residues glutamate 191 to valine 200 show a composition bias toward basic and acidic residues. A Glycyl lysine isopeptide (Lys-Gly) (interchain with G-Cter in SUMO2) cross-link involves residue lysine 271. The region spanning arginine 291–aspartate 511 is the Helicase ATP-binding domain. Histidine 304–threonine 311 lines the ATP pocket. The DEAH box motif lies at aspartate 462–histidine 465. The LXXLL motif 1 motif lies at leucine 550–leucine 554. The segment at serine 649–leucine 670 is disordered. Glycyl lysine isopeptide (Lys-Gly) (interchain with G-Cter in SUMO2) cross-links involve residues lysine 664, lysine 681, lysine 758, lysine 900, lysine 1013, and lysine 1017. Positions histidine 727–leucine 895 constitute a Helicase C-terminal domain. Disordered stretches follow at residues glutamine 1026–serine 1045 and alanine 1120–aspartate 1170. Polar residues predominate over residues serine 1135–serine 1154. Phosphoserine is present on residues serine 1168 and serine 1171. Disordered regions lie at residues valine 1184–serine 1212 and threonine 1259–glutamine 1281. Threonine 1259 carries the post-translational modification Phosphothreonine. Residues leucine 1328–leucine 1332 carry the LXXLL motif 2 motif. The interval alanine 1444–lysine 1466 is disordered. Over residues asparagine 1451–lysine 1466 the composition is skewed to acidic residues.

The protein belongs to the SNF2/RAD54 helicase family. As to quaternary structure, interacts with AR via its N-terminus. Interacts with DYRK1A. Binds DNA and mononucleosomes, but does not seem to form large multiprotein complexes. In terms of processing, sumoylated. Expressed at relatively low level, with highest expression in testis, liver and kidney. In brain, it is expressed in hippocampal and cerebellar neurons. In testis, it is present at high level in Sertoli cell nuclei. Also present in Leydig cell (at protein level).

It localises to the nucleus. The catalysed reaction is ATP + H2O = ADP + phosphate + H(+). With respect to regulation, enzyme activity is enhanced by dsDNA (double-stranded DNA) and ssDNA (single-stranded DNA). In terms of biological role, DNA helicase that modulates androgen receptor (AR)-dependent transactivation in a promoter-dependent manner. Not able to remodel mononucleosomes in vitro. Acts as an AR-coregulator in Sertoli cells. This Mus musculus (Mouse) protein is Helicase ARIP4 (Rad54l2).